Consider the following 157-residue polypeptide: Serine-protein kinase RsbW (157 aa).

This sequence belongs to the anti-sigma-factor family.

The enzyme catalyses L-seryl-[protein] + ATP = O-phospho-L-seryl-[protein] + ADP + H(+). It catalyses the reaction L-threonyl-[protein] + ATP = O-phospho-L-threonyl-[protein] + ADP + H(+). In terms of biological role, negative regulator of sigma-B activity. Phosphorylates and inactivates its specific antagonist protein, RsbV. Upon phosphorylation of RsbV, RsbW is released and binds to sigma-B, thereby blocking its ability to form an RNA polymerase holoenzyme (E-sigma-B). This Listeria innocua serovar 6a (strain ATCC BAA-680 / CLIP 11262) protein is Serine-protein kinase RsbW.